A 494-amino-acid polypeptide reads, in one-letter code: UPF0371 protein SSA_0208 (494 aa).

Belongs to the UPF0371 family.

The sequence is that of UPF0371 protein SSA_0208 from Streptococcus sanguinis (strain SK36).